Here is a 154-residue protein sequence, read N- to C-terminus: 3-dehydroquinate dehydratase (154 aa).

The active-site Proton acceptor is Tyr22. Substrate-binding residues include Asn73, His79, and Asp86. Residue His99 is the Proton donor of the active site. Substrate is bound by residues Leu100 to Ser101 and Arg110.

Belongs to the type-II 3-dehydroquinase family. As to quaternary structure, homododecamer.

The enzyme catalyses 3-dehydroquinate = 3-dehydroshikimate + H2O. Its pathway is metabolic intermediate biosynthesis; chorismate biosynthesis; chorismate from D-erythrose 4-phosphate and phosphoenolpyruvate: step 3/7. Its function is as follows. Catalyzes a trans-dehydration via an enolate intermediate. This chain is 3-dehydroquinate dehydratase, found in Carboxydothermus hydrogenoformans (strain ATCC BAA-161 / DSM 6008 / Z-2901).